A 381-amino-acid chain; its full sequence is Metallophosphoesterase 1 (381 aa).

The chain crosses the membrane as a helical span at residues 15 to 35 (LIFAFVSVFVFCEYVIYYLVI). Asp-59, Asp-101, Asn-139, His-234, His-288, and His-290 together coordinate a divalent metal cation. The helical transmembrane segment at 341–361 (TVLVVYCSSCLIIALITLIHL) threads the bilayer. Residues 377-381 (KHKTL) carry the Di-lysine motif motif.

This sequence belongs to the metallophosphoesterase superfamily. MPPE1 family. Mn(2+) is required as a cofactor.

The protein resides in the endoplasmic reticulum-Golgi intermediate compartment membrane. In terms of biological role, metallophosphoesterase that catalyzes the removal of a side-chain ethanolamine-phosphate (EtNP) from the second mannose of the GPI-anchor protein intermediate. Participates in the glycan remodeling steps of GPI-anchor maturation to allow an efficient transport of GPI-anchor proteins from the endoplasmic reticulum to the Golgi. The sequence is that of Metallophosphoesterase 1 from Danio rerio (Zebrafish).